Reading from the N-terminus, the 144-residue chain is Deoxyuridine 5'-triphosphate nucleotidohydrolase (144 aa).

Residues 63 to 65, Asn-76, and 80 to 82 contribute to the substrate site; these read RSG and TID.

It belongs to the dUTPase family. Mg(2+) is required as a cofactor.

It catalyses the reaction dUTP + H2O = dUMP + diphosphate + H(+). It participates in pyrimidine metabolism; dUMP biosynthesis; dUMP from dCTP (dUTP route): step 2/2. This enzyme is involved in nucleotide metabolism: it produces dUMP, the immediate precursor of thymidine nucleotides and it decreases the intracellular concentration of dUTP so that uracil cannot be incorporated into DNA. The sequence is that of Deoxyuridine 5'-triphosphate nucleotidohydrolase from Bacteroides thetaiotaomicron (strain ATCC 29148 / DSM 2079 / JCM 5827 / CCUG 10774 / NCTC 10582 / VPI-5482 / E50).